The chain runs to 34 residues: MSDIN-like toxin proprotein 3 (34 aa).

A propeptide spanning residues 1 to 10 is cleaved from the precursor; the sequence is MSDINVIRAP. Residues 11–18 constitute a cross-link (cyclopeptide (Leu-Pro)); it reads LLILSILP. Residues 19–34 constitute a propeptide that is removed on maturation; it reads CVGDDIEVLRRGEGLS.

Belongs to the MSDIN fungal toxin family. In terms of processing, processed by the macrocyclase-peptidase enzyme POPB to yield a toxic cyclic octapeptide. POPB first removes 10 residues from the N-terminus. Conformational trapping of the remaining peptide forces the enzyme to release this intermediate rather than proceed to macrocyclization. The enzyme rebinds the remaining peptide in a different conformation and catalyzes macrocyclization of the N-terminal 8 residues. Expressed in basidiocarps.

In terms of biological role, probable toxin that belongs to the MSDIN-like toxin family responsible for a large number of food poisoning cases and deaths. This is MSDIN-like toxin proprotein 3 from Amanita exitialis (Guangzhou destroying angel).